A 124-amino-acid polypeptide reads, in one-letter code: Small ribosomal subunit protein bS6 (124 aa).

The segment at 96-124 (ETAPSPMMKEVQREEARKAAQTTTEGQPA) is disordered. Over residues 115-124 (AQTTTEGQPA) the composition is skewed to polar residues.

Belongs to the bacterial ribosomal protein bS6 family.

Binds together with bS18 to 16S ribosomal RNA. In Cupriavidus metallidurans (strain ATCC 43123 / DSM 2839 / NBRC 102507 / CH34) (Ralstonia metallidurans), this protein is Small ribosomal subunit protein bS6.